Reading from the N-terminus, the 410-residue chain is Sensor histidine kinase GlnK (410 aa).

Topologically, residues 1-15 (MLITVPLAGELKFYP) are extracellular. A helical membrane pass occupies residues 16–36 (LNEEFRVSFGAPVFFFFLSLL). Residues 37 to 38 (RH) lie on the Cytoplasmic side of the membrane. Residues 39 to 59 (VPAVLPGFLTGAAVFIFRVFL) form a helical membrane-spanning segment. At 60 to 71 (ELWGGGHNGLTP) the chain is on the extracellular side. The helical transmembrane segment at 72-92 (ILYDQASGFFFYMTYACLFSI) threads the bilayer. Residues 93–102 (LKANRFRERP) are Cytoplasmic-facing. A helical membrane pass occupies residues 103 to 123 (IMLGFIGFMIEVVSDCVELTV). Residues 124-139 (QFLIFHTVVTPEKITD) lie on the Extracellular side of the membrane. Residues 140–160 (IAVIAISHTFIVMSFYSVLKL) traverse the membrane as a helical segment. At 161–410 (YETQSREKQT…LPVRHLIQKG (250 aa)) the chain is on the cytoplasmic side. In terms of domain architecture, Histidine kinase spans 189-405 (VHLKKTLKTT…VFAIRLPVRH (217 aa)). Phosphohistidine; by autocatalysis is present on His-190.

As to quaternary structure, homotrimer. Under poor nitrogen source such as nitrate, the complex between GlnK and AmtB, which are the transmembrane ammonium transporter and its cognate regulator, respectively, interacts with TnrA. GlnK-ATP complex are not able to bind TnrA.

The protein resides in the cell membrane. It carries out the reaction ATP + protein L-histidine = ADP + protein N-phospho-L-histidine.. Its function is as follows. Member of the two-component regulatory system GlnK/GlnL that positively regulates the expression of the glsA-glnT operon in response to glutamine. It seems that autophosphorylated GlnK transfers a phosphoryl group to GlnL, which positively regulates the expression of the glsA-glnT operon. Interaction between GlnK-AmtB complex and TnrA protects TnrA from proteolytic degradation. This chain is Sensor histidine kinase GlnK, found in Bacillus subtilis (strain 168).